A 159-amino-acid chain; its full sequence is Dynein 18 kDa light chain, flagellar outer arm (159 aa).

EF-hand domains lie at 18 to 53 (EEMD…LGQN), 54 to 89 (PTEE…NKQM), and 129 to 159 (ELTV…ALLS). Residues Asp-31, Asp-33, Ser-35, Thr-37, Glu-42, Asp-67, Asp-69, Ser-71, Cys-73, and Glu-78 each contribute to the Ca(2+) site.

As to quaternary structure, consists of at least 3 heavy chains (alpha, beta and gamma), 2 intermediate chains and 8 light chains.

The protein resides in the cell projection. It is found in the cilium. It localises to the flagellum. Its function is as follows. May be involved in the calcium-mediated regulation of dynein motor function. Binds 1 mole of calcium. The polypeptide is Dynein 18 kDa light chain, flagellar outer arm (Chlamydomonas reinhardtii (Chlamydomonas smithii)).